Here is a 395-residue protein sequence, read N- to C-terminus: Inner membrane protein YjgN (395 aa).

The Cytoplasmic segment spans residues 1-24 (MNNVISSKDNHNHTLVFTGKGGKY). The helical transmembrane segment at 25 to 45 (FVICLVNFLLTCITLGIYAPW) threads the bilayer. The Periplasmic portion of the chain corresponds to 46–71 (AMVKCRRYIYTNMTLNNQPFAYKATG). Residues 72–92 (GALFISVLLVFIIYIVSLSLI) traverse the membrane as a helical segment. Residues 93–95 (EHG) lie on the Cytoplasmic side of the membrane. A helical membrane pass occupies residues 96–116 (HPGLGFTLFGLLIAIIPFMAV). The Periplasmic portion of the chain corresponds to 117–146 (KGLQYQAMMTSLNGVHFGFQCSMRRAWWYM). The helical transmembrane segment at 147 to 167 (FALPVLLMVALYIVLYIISLV) threads the bilayer. Position 168 (T168) is a topological domain, cytoplasmic. The helical transmembrane segment at 169 to 189 (IAVGGLVFSIVFLGLLAIIGI) threads the bilayer. Residues 190 to 229 (GVINGITYSKWMTLFGNGANFGIHRFSIQVNVKTCIRGCV) are Periplasmic-facing. The helical transmembrane segment at 230–250 (LAMLTLFPFAVVIGYLIAPVF) threads the bilayer. Residues 251-275 (TDMILLSMMGNAQAGGALILQYYGQ) are Cytoplasmic-facing. Residues 276 to 296 (IMACYFLYFLAIIVVTSYLYV) form a helical membrane-spanning segment. Residues 297-327 (ALRNLFLNNLSLANDSIRFHSSVTAHGMLWR) lie on the Periplasmic side of the membrane. Residues 328–348 (LLVVFVISGVTLGLAYPWLKI) form a helical membrane-spanning segment. The Cytoplasmic portion of the chain corresponds to 349–395 (WLVSWLAQNTQVQGDLDSLELTNDEKPLENSPLMWISRGIMPYFPFI).

It is found in the cell inner membrane. In Salmonella typhimurium (strain LT2 / SGSC1412 / ATCC 700720), this protein is Inner membrane protein YjgN (yjgN).